The following is a 65-amino-acid chain: Kunitz-type serine protease inhibitor IX (65 aa).

Positions 7-57 (CNLLPETGRCNALIPAFYYNSHLHKCQKFNYGGCGGNANNFKTIDECQRTC) constitute a BPTI/Kunitz inhibitor domain. 3 disulfide bridges follow: Cys7–Cys57, Cys16–Cys40, and Cys32–Cys53.

The protein belongs to the venom Kunitz-type family. Expressed by the venom gland.

The protein resides in the secreted. In terms of biological role, dual-function toxin that inhibits both serine proteases (high activity on chymotrypsin (Ki = 18 nM), and low activity on elastase) and voltage-gated potassium channels Kv1.3/KCNA3 (IC(50) = 120.0 nM). The chain is Kunitz-type serine protease inhibitor IX from Bungarus fasciatus (Banded krait).